Here is a 219-residue protein sequence, read N- to C-terminus: Large ribosomal subunit protein uL16y (219 aa).

It belongs to the universal ribosomal protein uL16 family. In terms of assembly, component of the small ribosomal subunit. Mature ribosomes consist of a small (40S) and a large (60S) subunit. The 40S subunit contains about 33 different proteins and 1 molecule of RNA (18S). The 60S subunit contains about 49 different proteins and 3 molecules of RNA (25S, 5.8S and 5S).

The polypeptide is Large ribosomal subunit protein uL16y (SG12) (Oryza sativa subsp. japonica (Rice)).